The chain runs to 221 residues: Casparian strip membrane protein 3 (221 aa).

Over residues 1-12 (MDIEKAGSRREE) the composition is skewed to basic and acidic residues. The tract at residues 1 to 27 (MDIEKAGSRREEEEPIVQRPKLDKGKG) is disordered. Residues 1–58 (MDIEKAGSRREEEEPIVQRPKLDKGKGKAHVFAPPMNYNRIMDKHKQEKMSPAGWKRG) lie on the Cytoplasmic side of the membrane. The helical transmembrane segment at 59-79 (VAIFDFVLRLIAAITAMAAAA) threads the bilayer. Topologically, residues 80-109 (KMATTEETLPFFTQFLQFQADYTDLPTMSS) are extracellular. A helical membrane pass occupies residues 110-130 (FVIVNSIVGGYLTLSLPFSIV). Topologically, residues 131–148 (CILRPLAVPPRLFLILCD) are cytoplasmic. Residues 149–169 (TVMMGLTLMAASASAAIVYLA) traverse the membrane as a helical segment. Residues 170–194 (HNGNSSSNWLPVCQQFGDFCQGTSG) lie on the Extracellular side of the membrane. Asn173 carries N-linked (GlcNAc...) asparagine glycosylation. Residues 195–215 (AVVASFIAATLLMFLVILSAF) form a helical membrane-spanning segment. At 216 to 221 (ALKRTT) the chain is on the cytoplasmic side.

This sequence belongs to the Casparian strip membrane proteins (CASP) family. In terms of assembly, homodimer and heterodimers with other CASP proteins. Interacts with CASP1, CASP2, CASP4 and CASP5.

It localises to the cell membrane. Functionally, regulates membrane-cell wall junctions and localized cell wall deposition. Required for establishment of the Casparian strip membrane domain (CSD) and the subsequent formation of Casparian strips, a cell wall modification of the root endodermis that determines an apoplastic barrier between the intraorganismal apoplasm and the extraorganismal apoplasm and prevents lateral diffusion. This chain is Casparian strip membrane protein 3 (CASP3), found in Arabidopsis thaliana (Mouse-ear cress).